Here is a 208-residue protein sequence, read N- to C-terminus: Uracil phosphoribosyltransferase (208 aa).

5-phospho-alpha-D-ribose 1-diphosphate is bound by residues Arg78, Arg103, and 130–138 (DPMFATGGT). Uracil is bound by residues Ile193 and 198-200 (GDA). Residue Asp199 participates in 5-phospho-alpha-D-ribose 1-diphosphate binding.

This sequence belongs to the UPRTase family. Mg(2+) serves as cofactor.

The enzyme catalyses UMP + diphosphate = 5-phospho-alpha-D-ribose 1-diphosphate + uracil. The protein operates within pyrimidine metabolism; UMP biosynthesis via salvage pathway; UMP from uracil: step 1/1. With respect to regulation, allosterically activated by GTP. Functionally, catalyzes the conversion of uracil and 5-phospho-alpha-D-ribose 1-diphosphate (PRPP) to UMP and diphosphate. The chain is Uracil phosphoribosyltransferase from Campylobacter jejuni subsp. jejuni serotype O:2 (strain ATCC 700819 / NCTC 11168).